A 225-amino-acid polypeptide reads, in one-letter code: NAD(P)H-quinone oxidoreductase subunit K, chloroplastic (225 aa).

Residues Cys43, Cys44, Cys108, and Cys139 each coordinate [4Fe-4S] cluster.

The protein belongs to the complex I 20 kDa subunit family. NDH is composed of at least 16 different subunits, 5 of which are encoded in the nucleus. Requires [4Fe-4S] cluster as cofactor.

It is found in the plastid. It localises to the chloroplast thylakoid membrane. The enzyme catalyses a plastoquinone + NADH + (n+1) H(+)(in) = a plastoquinol + NAD(+) + n H(+)(out). It carries out the reaction a plastoquinone + NADPH + (n+1) H(+)(in) = a plastoquinol + NADP(+) + n H(+)(out). In terms of biological role, NDH shuttles electrons from NAD(P)H:plastoquinone, via FMN and iron-sulfur (Fe-S) centers, to quinones in the photosynthetic chain and possibly in a chloroplast respiratory chain. The immediate electron acceptor for the enzyme in this species is believed to be plastoquinone. Couples the redox reaction to proton translocation, and thus conserves the redox energy in a proton gradient. In Manihot esculenta (Cassava), this protein is NAD(P)H-quinone oxidoreductase subunit K, chloroplastic.